Here is an 874-residue protein sequence, read N- to C-terminus: DNA mismatch repair protein MutS (874 aa).

Residues 1–12 (MSNDRPLTHSEA) are compositionally biased toward basic and acidic residues. Residues 1-20 (MSNDRPLTHSEAESSALRLG) are disordered. An ATP-binding site is contributed by 661–668 (GPNASGKS). Positions 854–874 (RKSSMGDPPTAPEINQGELPF) are disordered.

The protein belongs to the DNA mismatch repair MutS family.

Its function is as follows. This protein is involved in the repair of mismatches in DNA. It is possible that it carries out the mismatch recognition step. This protein has a weak ATPase activity. The protein is DNA mismatch repair protein MutS of Thermosynechococcus vestitus (strain NIES-2133 / IAM M-273 / BP-1).